The chain runs to 454 residues: Zeatin O-xylosyltransferase (454 aa).

Belongs to the UDP-glycosyltransferase family. In terms of tissue distribution, high level in young seeds, less in older seeds and very low in roots.

The catalysed reaction is zeatin + UDP-alpha-D-xylose = O-beta-D-xylosylzeatin + UDP + H(+). In terms of biological role, utilizes UDP-xylose as the sugar donor and catalyzes the formation of o-xylosylzeatin from zeatin. Does not act on UDP-glucose. This chain is Zeatin O-xylosyltransferase, found in Phaseolus vulgaris (Kidney bean).